Consider the following 341-residue polypeptide: Methionine import ATP-binding protein MetN 1 (341 aa).

Residues Ile-2–Val-241 enclose the ABC transporter domain. Gly-38–Ser-45 serves as a coordination point for ATP.

It belongs to the ABC transporter superfamily. Methionine importer (TC 3.A.1.24) family. The complex is composed of two ATP-binding proteins (MetN), two transmembrane proteins (MetI) and a solute-binding protein (MetQ).

It localises to the cell membrane. It carries out the reaction L-methionine(out) + ATP + H2O = L-methionine(in) + ADP + phosphate + H(+). The enzyme catalyses D-methionine(out) + ATP + H2O = D-methionine(in) + ADP + phosphate + H(+). In terms of biological role, part of the ABC transporter complex MetNIQ involved in methionine import. Responsible for energy coupling to the transport system. The polypeptide is Methionine import ATP-binding protein MetN 1 (Staphylococcus epidermidis (strain ATCC 35984 / DSM 28319 / BCRC 17069 / CCUG 31568 / BM 3577 / RP62A)).